A 484-amino-acid polypeptide reads, in one-letter code: Putative myrosinase 6 (484 aa).

N28 is a glycosylation site (N-linked (GlcNAc...) asparagine). Residues Q39, H140, and 184-185 contribute to the a beta-D-glucoside site; that span reads NQ. The cysteines at positions 204 and 207 are disulfide-linked. A glycan (N-linked (GlcNAc...) asparagine) is linked at N260. A beta-D-glucoside contacts are provided by residues Y321, W440, 447 to 448, and F456; that span reads EF. N462 carries an N-linked (GlcNAc...) asparagine glycan.

It belongs to the glycosyl hydrolase 1 family.

It catalyses the reaction a thioglucoside + H2O = a sugar + a thiol.. This chain is Putative myrosinase 6, found in Arabidopsis thaliana (Mouse-ear cress).